A 338-amino-acid chain; its full sequence is UDP-N-acetylenolpyruvoylglucosamine reductase (338 aa).

One can recognise an FAD-binding PCMH-type domain in the interval 17–188 (IAARTDWWID…MYVDYRLRLK (172 aa)). Arginine 164 is a catalytic residue. The Proton donor role is filled by serine 237. The active site involves glutamate 333.

The protein belongs to the MurB family. The cofactor is FAD.

Its subcellular location is the cytoplasm. It carries out the reaction UDP-N-acetyl-alpha-D-muramate + NADP(+) = UDP-N-acetyl-3-O-(1-carboxyvinyl)-alpha-D-glucosamine + NADPH + H(+). It functions in the pathway cell wall biogenesis; peptidoglycan biosynthesis. Its function is as follows. Cell wall formation. This chain is UDP-N-acetylenolpyruvoylglucosamine reductase, found in Porphyromonas gingivalis (strain ATCC BAA-308 / W83).